We begin with the raw amino-acid sequence, 492 residues long: Transcription factor IIIB 60 kDa subunit (492 aa).

The TFIIB-type zinc finger occupies 1 to 30 (MGCPNCGSTTFESDTASGNTYCTQCGVVVE). Residues Cys3, Cys6, Cys22, and Cys25 each coordinate Zn(2+). The tract at residues 440–468 (QPRKRRRYRPRDSTSDGIADTAAESAKEM) is disordered.

It belongs to the TFIIB family. TFIIIB comprises the TATA-binding protein (TBP), the B-related factor (BRF) and a third subunit (Potential). Interacts with maf1.

It localises to the nucleus. General activator of RNA polymerase III transcription. The protein is Transcription factor IIIB 60 kDa subunit (brf1) of Schizosaccharomyces pombe (strain 972 / ATCC 24843) (Fission yeast).